A 371-amino-acid polypeptide reads, in one-letter code: 3-isopropylmalate dehydrogenase (371 aa).

At Thr-55 the chain carries Phosphothreonine. 78 to 89 (GPEWTNPNCRPE) contacts NAD(+). The substrate site is built by Arg-96, Arg-106, Arg-135, and Asp-224. Positions 224, 249, and 253 each coordinate Mg(2+). An NAD(+)-binding site is contributed by 290-302 (GSAPDIAGKGIVN).

This sequence belongs to the isocitrate and isopropylmalate dehydrogenases family. In terms of assembly, homodimer. Mg(2+) is required as a cofactor. The cofactor is Mn(2+).

The protein resides in the cytoplasm. The catalysed reaction is (2R,3S)-3-isopropylmalate + NAD(+) = 4-methyl-2-oxopentanoate + CO2 + NADH. It participates in amino-acid biosynthesis; L-leucine biosynthesis; L-leucine from 3-methyl-2-oxobutanoate: step 3/4. Functionally, catalyzes the oxidation of 3-carboxy-2-hydroxy-4-methylpentanoate (3-isopropylmalate) to 3-carboxy-4-methyl-2-oxopentanoate. The product decarboxylates to 4-methyl-2 oxopentanoate. This chain is 3-isopropylmalate dehydrogenase (leu1), found in Schizosaccharomyces pombe (strain 972 / ATCC 24843) (Fission yeast).